We begin with the raw amino-acid sequence, 146 residues long: Prefoldin subunit alpha 1 (146 aa).

It belongs to the prefoldin subunit alpha family. As to quaternary structure, heterohexamer of two alpha and four beta subunits.

The protein resides in the cytoplasm. Molecular chaperone capable of stabilizing a range of proteins. Seems to fulfill an ATP-independent, HSP70-like function in archaeal de novo protein folding. The polypeptide is Prefoldin subunit alpha 1 (Thermococcus kodakarensis (strain ATCC BAA-918 / JCM 12380 / KOD1) (Pyrococcus kodakaraensis (strain KOD1))).